An 82-amino-acid chain; its full sequence is Metallothionein (82 aa).

Cd(2+) is bound by residues cysteine 6, cysteine 8, cysteine 11, cysteine 13, cysteine 29, cysteine 33, histidine 37, cysteine 43, cysteine 48, and cysteine 50. Positions 6, 8, and 11 each coordinate Zn(2+). Zn(2+) contacts are provided by cysteine 29, cysteine 33, histidine 37, cysteine 43, cysteine 48, and cysteine 50. The segment at 61–82 (ITNNQLDEALEETFPASDPISP) is disordered.

It belongs to the metallothionein superfamily.

Metallothioneins are small proteins that have a high content of cysteine residues which allow them to bind heavy metal ions through clusters of thiolate bonds. Preferentially, binds four Cd(2+) ions. Also binds three Zn(2+) ions but with less affinity. Required for long-term viability. May play a role in the storage or sequestration of metals when present in excess. The protein is Metallothionein of Pseudomonas fluorescens (strain Q2-87).